The chain runs to 789 residues: MPLCEKGNDPIDSSTIDSLCAAFDKTLKSTPDVQKYNDAINTIFQLRQKSESGKMPADLTNSEALKDRQKIEEILTRSYQDHSESRVHLSKLIQNDIPFALNLFEILSRSSIHVFVGCFSNKDATIALLNELQIRIHYGEDTHVTYLLSIILQLLNKFKYNFKEVRFLVKELILRISEDEVKSMMLIIFAELQSSFQKDFDKAVVDFMSSLIVEAEIDVGNDPLSIIVKTLSELYPSLTTLCSEIFLTKGLSKLFKKRVFEEQDLQFTKELLRLLSSACIDETMRTYITENYLQLLERSLNVEDVQIYSALVLVKTWSFTKLTCINLKQLSEIFINAISRRIMPKIENVNESAVKLEEVPKVEMSVEALAYLSLKASVKIMIRSNESFTEILLTMIKSQKMTHCLYGLLVIMANLSTLPEESNGSSQSINDLKNYADLKGPGADKVGAEKESKEDILLFNEKYILRTELISFLKREMHNLSPNCKQQVVRVIYNITRSKNFIPQCISQGGTTIILEYLANKQDIGEPIRILGCRALTRMLIFTNPGLIFKKYSALNAIPFLFELLPRSTPVDDNPLHNDEQIKLTDNYEALLALTNLASSETSDGEEVCKHIVSTKVYWSTIENLMLDENVPLQRSTLELISNMMSHPLTIAAKFFNLENPQSLRNFNILVKLLQLSDVESQRAVAAIFANIATTIPLIAKELLTKKELIENAIQVFADQIDDIELRQRLLMLFFGLFEVIPDNGTNEVYPLLQENQKLKDALNMSLKRGDSGPEFSAAIPVILAKIKV.

Phosphoserine is present on Ser-18.

The protein localises to the cytoplasm. In terms of biological role, required for mother cell-specific ho expression. Might be required for the transport of factors (such as ASH1) that promote HO repression from the mother cell into its bud. The polypeptide is SWI5-dependent HO expression protein 4 (SHE4) (Saccharomyces cerevisiae (strain ATCC 204508 / S288c) (Baker's yeast)).